An 82-amino-acid chain; its full sequence is U16-lycotoxin-Ls1a (82 aa).

The N-terminal stretch at 1 to 22 (MSPKVQALLLLVGLITFLAVHA) is a signal peptide. A propeptide spanning residues 23–34 (EEELSETVESER) is cleaved from the precursor. 4 disulfide bridges follow: cysteine 36–cysteine 51, cysteine 43–cysteine 56, cysteine 50–cysteine 67, and cysteine 58–cysteine 65.

This sequence belongs to the neurotoxin 02 (plectoxin) family. 04 (U16-lycotoxin) subfamily. As to expression, expressed by the venom gland.

It is found in the secreted. This chain is U16-lycotoxin-Ls1a, found in Lycosa singoriensis (Wolf spider).